We begin with the raw amino-acid sequence, 253 residues long: Imidazole glycerol phosphate synthase subunit HisF (253 aa).

Active-site residues include aspartate 11 and aspartate 130.

This sequence belongs to the HisA/HisF family. In terms of assembly, heterodimer of HisH and HisF.

Its subcellular location is the cytoplasm. It catalyses the reaction 5-[(5-phospho-1-deoxy-D-ribulos-1-ylimino)methylamino]-1-(5-phospho-beta-D-ribosyl)imidazole-4-carboxamide + L-glutamine = D-erythro-1-(imidazol-4-yl)glycerol 3-phosphate + 5-amino-1-(5-phospho-beta-D-ribosyl)imidazole-4-carboxamide + L-glutamate + H(+). Its pathway is amino-acid biosynthesis; L-histidine biosynthesis; L-histidine from 5-phospho-alpha-D-ribose 1-diphosphate: step 5/9. IGPS catalyzes the conversion of PRFAR and glutamine to IGP, AICAR and glutamate. The HisF subunit catalyzes the cyclization activity that produces IGP and AICAR from PRFAR using the ammonia provided by the HisH subunit. This Acidobacterium capsulatum (strain ATCC 51196 / DSM 11244 / BCRC 80197 / JCM 7670 / NBRC 15755 / NCIMB 13165 / 161) protein is Imidazole glycerol phosphate synthase subunit HisF.